A 439-amino-acid polypeptide reads, in one-letter code: MYEKIIILSVFLLTFLPSCFSSYPFNHRDDLFMSSNVYYETNRQHQHGHNTRNSHLKNRHGYAPRSSPRSFNVNTFGAKANGNDDSKAFMKAWEAACSSTGIVYIVAPKNRDYMLKAVTFSGPCKSSLIIFKIYGRIEAWENPSDYKERRHWIVFENVNNLRVEGGGRIDGNGHIWWPKSCKINPQLPCLGAPTAVTFVECNNLRVSNIRLENAQQMHLTFQDCKNVKALNLMVTSPADSPNTDGIHVSGTQNILIQDSIVRTGDDCISIVSGSENVRATGITCGPGHGISIGSLGEDNSEAYVSNVVVNKATLIGTTNGVRIKTWQGGHGMAKNIIFQDIIMKNVTNPIIINQDYCDRVEACPEQKSAVQVSNVLYKNIQGTSSRPIAVKFVCSKNIPCRGISMQNVKLVDQTQQDVSKASCSNVKLDTRGNVSPLCT.

Positions 1 to 21 (MYEKIIILSVFLLTFLPSCFS) are cleaved as a signal peptide. Residues 43–69 (RQHQHGHNTRNSHLKNRHGYAPRSSPR) form a disordered region. Residues 44–62 (QHQHGHNTRNSHLKNRHGY) are compositionally biased toward basic residues. PbH1 repeat units follow at residues 201-250 (CNNL…HVSG) and 251-272 (TQNI…SIVS). The active-site Proton donor is Asp-265. His-288 is a catalytic residue. PbH1 repeat units lie at residues 304–325 (VSNV…RIKT) and 333–354 (AKNI…IINQ).

The protein belongs to the glycosyl hydrolase 28 family. Expressed predominantly in roots with lower expression levels in rosette leaves, flower buds and siliques. Bearly detected in seeds. Found in flowers undergoing floral organ abscission. Also expressed early in anther development, at the time of microspore separation.

It is found in the secreted. The protein resides in the cell wall. The enzyme catalyses (1,4-alpha-D-galacturonosyl)n+m + H2O = (1,4-alpha-D-galacturonosyl)n + (1,4-alpha-D-galacturonosyl)m.. Its function is as follows. Polygalacturonase required for cell type-specific pectin degradation to separate microspores. Involved in anther dehiscence and floral organ abscission. The polypeptide is Polygalacturonase QRT2 (QRT2) (Arabidopsis thaliana (Mouse-ear cress)).